The following is a 5099-amino-acid chain: Malformin synthetase mlfA (5099 aa).

Positions 224-615 (QRHAADRPHS…CGRADTQVKL (392 aa)) are adenylation 1. The region spanning 756 to 829 (THLENEIQLA…EAASLAKVRD (74 aa)) is the Carrier 1 domain. At serine 790 the chain carries O-(pantetheine 4'-phosphoryl)serine. A condensation 1 region spans residues 867 to 1297 (EDVFPCTSMQ…PVDSLTLLKP (431 aa)). An adenylation 2 region spans residues 1325–1717 (DRWVNRQPDT…GRKDTQVKLR (393 aa)). The 78-residue stretch at 1857 to 1934 (ARAPELERTL…QIATQCEGIA (78 aa)) folds into the Carrier 2 domain. Serine 1894 is subject to O-(pantetheine 4'-phosphoryl)serine. A disordered region spans residues 1995–2040 (MQQESSSSPAPSVSSSSSSSSAPKPLLAQPEPPTNLRDSVPEPFSL). The span at 1999–2017 (SSSSPAPSVSSSSSSSSAP) shows a compositional bias: low complexity. The condensation 2 stretch occupies residues 2067 to 2482 (EDIYPATPLQ…ALSPGDKKVL (416 aa)). Positions 2505 to 2897 (LSTPHAPAVC…VGRKDGQLKL (393 aa)) are adenylation 3. In terms of domain architecture, Carrier 3 spans 3032–3108 (RPATAQERGL…RLVLHLQNTS (77 aa)). O-(pantetheine 4'-phosphoryl)serine is present on serine 3069. Condensation regions lie at residues 3125 to 3589 (WVHL…TYDQ) and 3610 to 4033 (DIYP…QQAM). An adenylation 4 region spans residues 4058 to 4446 (YANREAVCAW…VGRKDSQIKF (389 aa)). Residues 4581–4657 (PPSTGMQQGI…DLAEHISSRV (77 aa)) enclose the Carrier 4 domain. Serine 4618 carries the O-(pantetheine 4'-phosphoryl)serine modification. The tract at residues 4696–5017 (DILPTTGFQR…LQTVVQHQNV (322 aa)) is condensation 5.

Belongs to the NRP synthetase family.

It functions in the pathway secondary metabolite biosynthesis. Its function is as follows. Nonribosomal peptide synthetase; part of the gene cluster that mediates the biosynthesis of malformins, cyclic pentapeptides with a disulfide bond between 2 consecutive cysteins, that show potential anti-tumor as well as antimalarial and antitrypanosomal properties. The nonribosomal peptide synthetase mlfA is responsible of the formation of the cyclic pentapeptide. The malformin biosynthesis clusters in malformin-producing fungi also contain enzymes involved in the formation of the disulfide bond between the two consecutive cysteins within malformins, in addition to additional tailoring enzymes such as methyltransferases or oxidoreductases. They are also composed of up to 4 major facilitator superfamily transporters, and transcription factors probably involved in the regulation of the expression of those clusters. The chain is Malformin synthetase mlfA from Aspergillus sclerotiicarbonarius (strain CBS 121057 / IBT 28362).